The primary structure comprises 327 residues: Undecaprenyl-phosphate 4-deoxy-4-formamido-L-arabinose transferase (327 aa).

2 helical membrane-spanning segments follow: residues L236–V256 and V270–L290.

This sequence belongs to the glycosyltransferase 2 family.

The protein resides in the cell inner membrane. The enzyme catalyses UDP-4-deoxy-4-formamido-beta-L-arabinose + di-trans,octa-cis-undecaprenyl phosphate = 4-deoxy-4-formamido-alpha-L-arabinopyranosyl di-trans,octa-cis-undecaprenyl phosphate + UDP. It participates in glycolipid biosynthesis; 4-amino-4-deoxy-alpha-L-arabinose undecaprenyl phosphate biosynthesis; 4-amino-4-deoxy-alpha-L-arabinose undecaprenyl phosphate from UDP-4-deoxy-4-formamido-beta-L-arabinose and undecaprenyl phosphate: step 1/2. It functions in the pathway bacterial outer membrane biogenesis; lipopolysaccharide biosynthesis. In terms of biological role, catalyzes the transfer of 4-deoxy-4-formamido-L-arabinose from UDP to undecaprenyl phosphate. The modified arabinose is attached to lipid A and is required for resistance to polymyxin and cationic antimicrobial peptides. The chain is Undecaprenyl-phosphate 4-deoxy-4-formamido-L-arabinose transferase from Klebsiella pneumoniae (strain 342).